Reading from the N-terminus, the 95-residue chain is Aspartyl/glutamyl-tRNA(Asn/Gln) amidotransferase subunit C (95 aa).

It belongs to the GatC family. In terms of assembly, heterotrimer of A, B and C subunits.

It catalyses the reaction L-glutamyl-tRNA(Gln) + L-glutamine + ATP + H2O = L-glutaminyl-tRNA(Gln) + L-glutamate + ADP + phosphate + H(+). The enzyme catalyses L-aspartyl-tRNA(Asn) + L-glutamine + ATP + H2O = L-asparaginyl-tRNA(Asn) + L-glutamate + ADP + phosphate + 2 H(+). Allows the formation of correctly charged Asn-tRNA(Asn) or Gln-tRNA(Gln) through the transamidation of misacylated Asp-tRNA(Asn) or Glu-tRNA(Gln) in organisms which lack either or both of asparaginyl-tRNA or glutaminyl-tRNA synthetases. The reaction takes place in the presence of glutamine and ATP through an activated phospho-Asp-tRNA(Asn) or phospho-Glu-tRNA(Gln). The sequence is that of Aspartyl/glutamyl-tRNA(Asn/Gln) amidotransferase subunit C from Chlorobaculum parvum (strain DSM 263 / NCIMB 8327) (Chlorobium vibrioforme subsp. thiosulfatophilum).